We begin with the raw amino-acid sequence, 625 residues long: Cysteine-rich receptor-like protein kinase 46 (625 aa).

Positions 1–23 are cleaved as a signal peptide; that stretch reads MASTLISSLAVVLPLTLLAPSMS. The Extracellular portion of the chain corresponds to 24 to 252; sequence MKISRIDVLG…LLAMSFTKEN (229 aa). 2 Gnk2-homologous domains span residues 29-130 and 135-237; these read IDVL…NYSF and VSHQ…NYTF. Residues asparagine 38, asparagine 127, asparagine 234, and asparagine 252 are each glycosylated (N-linked (GlcNAc...) asparagine). The helical transmembrane segment at 253–273 threads the bilayer; it reads LTYIFVISMVGVLAIAAGFWC. At 274 to 625 the chain is on the cytoplasmic side; it reads GKCFYMRTSP…TKPPFLHDSM (352 aa). The Protein kinase domain maps to 331-621; the sequence is FNESCKLGVG…LPTPTKPPFL (291 aa). Residues 337–345 and lysine 359 each bind ATP; that span reads LGVGGYGEV. Tyrosine 404 is modified (phosphotyrosine). Catalysis depends on aspartate 454, which acts as the Proton acceptor. The residue at position 458 (serine 458) is a Phosphoserine. Threonine 499 carries the phosphothreonine modification. A Phosphotyrosine modification is found at tyrosine 507.

The protein belongs to the protein kinase superfamily. Ser/Thr protein kinase family. CRK subfamily.

The protein localises to the membrane. It catalyses the reaction L-seryl-[protein] + ATP = O-phospho-L-seryl-[protein] + ADP + H(+). The catalysed reaction is L-threonyl-[protein] + ATP = O-phospho-L-threonyl-[protein] + ADP + H(+). The protein is Cysteine-rich receptor-like protein kinase 46 of Arabidopsis thaliana (Mouse-ear cress).